The primary structure comprises 266 residues: Killer cell lectin-like receptor 3 (266 aa).

Over 1-48 (MSEPEVTYSTVRLHKSSGLQKLVRHEETQGPREVGNRKCSAPWQLIVK) the chain is Cytoplasmic. A helical; Signal-anchor for type II membrane protein transmembrane segment spans residues 49–69 (ALGILCFLLLVTVAVLAVKIF). Over 70-266 (QYNQHKQEIN…CGKKLDKFPD (197 aa)) the chain is Extracellular. N-linked (GlcNAc...) asparagine glycans are attached at residues N79, N87, N104, and N113. An involved in dimerization region spans residues 147–151 (WFCYS). C149 and C154 form a disulfide bridge. Positions 150-258 (YSTKCYYFIM…CNIPYYCICG (109 aa)) constitute a C-type lectin domain. N160 carries an N-linked (GlcNAc...) asparagine glycan. 5 implicated in MHC class I binding regions span residues 160-162 (NKT), 195-196 (IP), 207-208 (KK), 224-233 (MKIRKMNFKS), and 240-245 (SKARIE). 3 disulfide bridges follow: C167–C255, C171–C257, and C236–C249.

Homodimer; disulfide-linked.

The protein localises to the membrane. Functionally, receptor on natural killer (NK) cells for class I MHC. The chain is Killer cell lectin-like receptor 3 (Klra3) from Mus musculus (Mouse).